Here is a 361-residue protein sequence, read N- to C-terminus: MFTGCGLFACVRRCDGGDVRKRGEAGAMSSRVAADPAGVEEEGSCKNVAAASARQLAWADVESVTGGFSSRVIGHGGFSTVYLASLSSSRLGAVKVHCSSERLHRAFRQELEVLLSLRHPHIVRLLGYCDERDEGVLVFEYAPNGDLHERLHCSEVAGGVASVLPWARRVAIAFQVAMALEYLHESRHPAVIHGDIKASNVLLDANMNAKLCDFGFAHVGFSATVGCRPSARAVMGSPGYVDPHLIRSGVATKKSDVYSFGVLLLELVTGKEAVCRDTGRRLTAAVGPMLSEGKVADVVDRRLGGEHDGAEAAVMAELAMQCIGDSPGLRPSMADVVRALQEKTSALASAVGSRLDRKMMF.

3 S-palmitoyl cysteine lipidation sites follow: C5, C10, and C14. One can recognise a Protein kinase domain in the interval 67 to 347; the sequence is GFSSRVIGHG…RALQEKTSAL (281 aa). ATP-binding positions include 73–81 and K95; that span reads IGHGGFSTV. Residue D195 is the Proton acceptor of the active site.

The protein belongs to the protein kinase superfamily. Ser/Thr protein kinase family. Self-interacts. Interacts with CATA, CATB and CATC at the plasma membrane. Post-translationally, palmitoylated. Palmotylation at Cys-5, Cys-10 and Cys-14 by DHHC9 is required for plasma membrane targeting and STRK1 function. In terms of processing, autophosphorylated. In terms of tissue distribution, accumulates in seeds. Mainly expressed in young roots, and, to a lower extent, in leaf veins, seedlings, stems, leaf sheath and young spikelet.

Its subcellular location is the cell membrane. It catalyses the reaction L-seryl-[protein] + ATP = O-phospho-L-seryl-[protein] + ADP + H(+). The enzyme catalyses L-threonyl-[protein] + ATP = O-phospho-L-threonyl-[protein] + ADP + H(+). The catalysed reaction is L-tyrosyl-[protein] + ATP = O-phospho-L-tyrosyl-[protein] + ADP + H(+). Functionally, acts probably as a dual specificity protein kinase. Regulates hydrogen peroxide (H(2)O(2)) homeostasis and improves salt tolerance by phosphorylating tyrosine residues of CATC thus activating its catalase activity. Promotes growth at the seedling stage and prevents grain yield loss under salt stress conditions. This Oryza sativa subsp. japonica (Rice) protein is Salt tolerance receptor-like cytoplasmic kinase 1.